The sequence spans 300 residues: GTPase Era (300 aa).

The Era-type G domain occupies 8–176 (RCGYVAIVGR…ERLVAGRLPQ (169 aa)). The tract at residues 16 to 23 (GRPNVGKS) is G1. 16-23 (GRPNVGKS) is a binding site for GTP. The segment at 42-46 (QTTRH) is G2. The G3 stretch occupies residues 63–66 (DTPG). Residues 63-67 (DTPGL) and 125-128 (NKAD) contribute to the GTP site. A G4 region spans residues 125 to 128 (NKAD). The tract at residues 155-157 (ISA) is G5. One can recognise a KH type-2 domain in the interval 199–283 (VREKIMRQLG…MLNLWVKVKG (85 aa)).

This sequence belongs to the TRAFAC class TrmE-Era-EngA-EngB-Septin-like GTPase superfamily. Era GTPase family. In terms of assembly, monomer.

The protein resides in the cytoplasm. Its subcellular location is the cell inner membrane. An essential GTPase that binds both GDP and GTP, with rapid nucleotide exchange. Plays a role in 16S rRNA processing and 30S ribosomal subunit biogenesis and possibly also in cell cycle regulation and energy metabolism. This Azotobacter vinelandii (strain DJ / ATCC BAA-1303) protein is GTPase Era.